Reading from the N-terminus, the 100-residue chain is Pancreatic polypeptide prohormone (100 aa).

The first 29 residues, 1–29 (MAVAYCCLSLFLVSTWVALLLQPLQGTWG), serve as a signal peptide directing secretion. Residue Tyr65 is modified to Tyrosine amide.

It belongs to the NPY family. No icosapeptide-like peptide is cleaved from the C-terminal.

It localises to the secreted. In terms of biological role, hormone secreted by pancreatic cells that acts as a regulator of pancreatic and gastrointestinal functions probably by signaling through the G protein-coupled receptor NPY4R2. The protein is Pancreatic polypeptide prohormone (Ppy) of Mus musculus (Mouse).